The chain runs to 338 residues: MAPIKIGINGFGRIGRLVARVILQREDCELVAVNDPFITTEYMTYMFKYDSVHGQWKHHDIKVKDEKTLLFGEKAVTVFGNRNPEEIPWGGTGADYVVESTGVFTDKDKAAAHLKGGAKKVIISAPSKDAPMFVVGVNEHEYKPELDIVSNASCTTNCLAPLAKVINDRFGIVEGLMTTVHSITATQKTVDGPSMKDWRGGRAASFNIIPSSTGAAKAVGKVLPSLNGKLTGMSFRVPTVDVSVVDLTVRIEKPATYEQVKAAIKEESEGKLKGILGYTEDDVVSTDFVGDNRSSIFDAKAGIALNDNFIKLVSWYDNEWGYSTRVVDLIAHIHKTCQ.

NAD(+) is bound by residues 13-14 (RI), aspartate 35, and arginine 82. D-glyceraldehyde 3-phosphate contacts are provided by residues 153-155 (SCT), threonine 184, 213-214 (TG), and arginine 236. The active-site Nucleophile is cysteine 154. Asparagine 318 provides a ligand contact to NAD(+).

This sequence belongs to the glyceraldehyde-3-phosphate dehydrogenase family. Homotetramer.

The protein resides in the cytoplasm. The catalysed reaction is D-glyceraldehyde 3-phosphate + phosphate + NAD(+) = (2R)-3-phospho-glyceroyl phosphate + NADH + H(+). Its pathway is carbohydrate degradation; glycolysis; pyruvate from D-glyceraldehyde 3-phosphate: step 1/5. In terms of biological role, key enzyme in glycolysis that catalyzes the first step of the pathway by converting D-glyceraldehyde 3-phosphate (G3P) into 3-phospho-D-glyceroyl phosphate. Essential for the maintenance of cellular ATP levels and carbohydrate metabolism. This chain is Glyceraldehyde-3-phosphate dehydrogenase, cytosolic (GAPC), found in Dianthus caryophyllus (Carnation).